Consider the following 430-residue polypeptide: 3-phosphoshikimate 1-carboxyvinyltransferase (430 aa).

The 3-phosphoshikimate site is built by Lys23, Ser24, and Arg28. Lys23 lines the phosphoenolpyruvate pocket. Gly95 and Arg123 together coordinate phosphoenolpyruvate. The 3-phosphoshikimate site is built by Ser169, Gln171, Asp315, and Lys342. Gln171 is a phosphoenolpyruvate binding site. Asp315 acts as the Proton acceptor in catalysis. Residues Arg346 and Arg388 each contribute to the phosphoenolpyruvate site.

Belongs to the EPSP synthase family. As to quaternary structure, monomer.

The protein localises to the cytoplasm. The enzyme catalyses 3-phosphoshikimate + phosphoenolpyruvate = 5-O-(1-carboxyvinyl)-3-phosphoshikimate + phosphate. It participates in metabolic intermediate biosynthesis; chorismate biosynthesis; chorismate from D-erythrose 4-phosphate and phosphoenolpyruvate: step 6/7. In terms of biological role, catalyzes the transfer of the enolpyruvyl moiety of phosphoenolpyruvate (PEP) to the 5-hydroxyl of shikimate-3-phosphate (S3P) to produce enolpyruvyl shikimate-3-phosphate and inorganic phosphate. This chain is 3-phosphoshikimate 1-carboxyvinyltransferase, found in Streptococcus pyogenes serotype M3 (strain ATCC BAA-595 / MGAS315).